The chain runs to 1003 residues: SWI/SNF-related matrix-associated actin-dependent regulator of chromatin subfamily A containing DEAD/H box 1 (1003 aa).

Disordered stretches follow at residues 15-130 (KKID…SKYK), 172-235 (GSSR…HFPD), and 274-351 (AKKE…EDYS). 3 stretches are compositionally biased toward basic and acidic residues: residues 172–188 (GSSRKRKLDEVPKDSSP), 221–235 (KQEASVKKLQRHFPD), and 274–294 (AKKEVSNGKEFSRSNKNDNKS). The CUE domain occupies 221 to 264 (KQEASVKKLQRHFPDLDKEELREVLQEHDWSFHEALEALKLFAE). Residues 295-311 (SAKAKANQNSNKAMAQN) show a composition bias toward low complexity. Residues 321 to 333 (KYSENAKRDTRDL) show a composition bias toward basic and acidic residues. Residues 486 to 654 (ALLHKHKVNM…MSLLNFVMPH (169 aa)) form the Helicase ATP-binding domain. Position 499–506 (499–506 (DEMGLGKT)) interacts with ATP. Positions 605-608 (DEGH) match the DEGH box motif. Residues 835–997 (ILEKLLSDIK…TIPLDMATLL (163 aa)) enclose the Helicase C-terminal domain.

Belongs to the SNF2/RAD54 helicase family.

It localises to the nucleus. The protein localises to the chromosome. The enzyme catalyses ATP + H2O = ADP + phosphate + H(+). Its function is as follows. DNA helicase that possesses intrinsic ATP-dependent nucleosome-remodeling activity and is both required for DNA repair and heterochromatin organization. Promotes DNA end resection of double-strand breaks (DSBs) following DNA damage: probably acts by weakening histone DNA interactions in nucleosomes flanking DSBs. Required for the restoration of heterochromatin organization after replication. The chain is SWI/SNF-related matrix-associated actin-dependent regulator of chromatin subfamily A containing DEAD/H box 1 (smarcad1) from Xenopus tropicalis (Western clawed frog).